We begin with the raw amino-acid sequence, 418 residues long: 3-isopropylmalate dehydratase large subunit (418 aa).

C299, C359, and C362 together coordinate [4Fe-4S] cluster.

Belongs to the aconitase/IPM isomerase family. LeuC type 2 subfamily. In terms of assembly, heterodimer of LeuC and LeuD. Requires [4Fe-4S] cluster as cofactor.

It catalyses the reaction (2R,3S)-3-isopropylmalate = (2S)-2-isopropylmalate. It participates in amino-acid biosynthesis; L-leucine biosynthesis; L-leucine from 3-methyl-2-oxobutanoate: step 2/4. Functionally, catalyzes the isomerization between 2-isopropylmalate and 3-isopropylmalate, via the formation of 2-isopropylmaleate. This is 3-isopropylmalate dehydratase large subunit from Nitratidesulfovibrio vulgaris (strain DSM 19637 / Miyazaki F) (Desulfovibrio vulgaris).